A 426-amino-acid polypeptide reads, in one-letter code: Glutamyl-tRNA reductase (426 aa).

Residues 50-53 (TCNR), Ser108, 113-115 (EPQ), and Gln119 contribute to the substrate site. Cys51 functions as the Nucleophile in the catalytic mechanism. NADP(+) is bound at residue 188–193 (GAGEMI).

Belongs to the glutamyl-tRNA reductase family. Homodimer.

The enzyme catalyses (S)-4-amino-5-oxopentanoate + tRNA(Glu) + NADP(+) = L-glutamyl-tRNA(Glu) + NADPH + H(+). It participates in porphyrin-containing compound metabolism; protoporphyrin-IX biosynthesis; 5-aminolevulinate from L-glutamyl-tRNA(Glu): step 1/2. Its function is as follows. Catalyzes the NADPH-dependent reduction of glutamyl-tRNA(Glu) to glutamate 1-semialdehyde (GSA). This Polaromonas sp. (strain JS666 / ATCC BAA-500) protein is Glutamyl-tRNA reductase.